Consider the following 291-residue polypeptide: MRLLPRLLLLLLLVFPATVLFRGGPRGSLAVAQDLTEDEETVEDSIIEDEDDEAEVEEDEPTDLVEDKEEEDVSGEPEASPSADTTILFVKGEDFPANNIVKFLVGFTNKGTEDFIVESLDASFRYPQDYQFYIQNFTALPLNTVVPPQRQATFEYSFIPAEPMGGRPFGLVINLNYKDLNGNVFQDAVFNQTVTVIEREDGLDGETIFMYMFLAGLGLLVIVGLHQLLESRKRKRPVQKVEMGTSSQNDVDMSWIPQETLNQIMQSRRDKASPRRLPRKRAQKRSVGSDE.

Positions 1–20 (MRLLPRLLLLLLLVFPATVL) are cleaved as a signal peptide. Residues 21 to 207 (FRGGPRGSLA…EREDGLDGET (187 aa)) are Lumenal-facing. Residues 34–83 (DLTEDEETVEDSIIEDEDDEAEVEEDEPTDLVEDKEEEDVSGEPEASPSA) are disordered. Acidic residues predominate over residues 35-75 (LTEDEETVEDSIIEDEDDEAEVEEDEPTDLVEDKEEEDVSG). 2 N-linked (GlcNAc...) asparagine glycosylation sites follow: Asn-136 and Asn-191. A helical membrane pass occupies residues 208 to 228 (IFMYMFLAGLGLLVIVGLHQL). Topologically, residues 229 to 291 (LESRKRKRPV…AQKRSVGSDE (63 aa)) are cytoplasmic. Ser-247 carries the phosphoserine modification. A Phosphothreonine modification is found at Thr-260. Positions 263 to 291 (QIMQSRRDKASPRRLPRKRAQKRSVGSDE) are disordered. Ser-273 carries the phosphoserine modification. Residues 274–284 (PRRLPRKRAQK) are compositionally biased toward basic residues.

Belongs to the TRAP-alpha family. As to quaternary structure, heterotetramer of TRAP-alpha, TRAP-beta, TRAP-delta and TRAP-gamma. Interacts with palmitoylated calnexin (CALX), the interaction is required for efficient folding of glycosylated proteins. In terms of processing, phosphorylated in its cytoplasmic tail.

It localises to the endoplasmic reticulum membrane. TRAP proteins are part of a complex whose function is to bind calcium to the ER membrane and thereby regulate the retention of ER resident proteins. May be involved in the recycling of the translocation apparatus after completion of the translocation process or may function as a membrane-bound chaperone facilitating folding of translocated proteins. The chain is Translocon-associated protein subunit alpha (SSR1) from Pongo abelii (Sumatran orangutan).